We begin with the raw amino-acid sequence, 37 residues long: Large ribosomal subunit protein bL36 (37 aa).

Belongs to the bacterial ribosomal protein bL36 family.

This chain is Large ribosomal subunit protein bL36, found in Streptomyces griseus subsp. griseus (strain JCM 4626 / CBS 651.72 / NBRC 13350 / KCC S-0626 / ISP 5235).